A 183-amino-acid chain; its full sequence is Outer membrane protein H.8 (183 aa).

The N-terminal stretch at 1 to 17 (MKAYLALISAAVIGLAA) is a signal peptide. Cys18 carries the N-palmitoyl cysteine lipid modification. Cys18 carries S-diacylglycerol cysteine lipidation. Residues 27–51 (AEATPAAEAPASEAPAAEAAPADAA) are disordered. Residues 57–183 (GNCAATVESN…LMNGKVTLVD (127 aa)) enclose the Plastocyanin-like domain. Cu cation is bound by residues His102, Cys166, His171, and Met175.

The cofactor is Cu cation.

Its subcellular location is the cell outer membrane. The polypeptide is Outer membrane protein H.8 (Neisseria meningitidis serogroup C / serotype 2a (strain ATCC 700532 / DSM 15464 / FAM18)).